The primary structure comprises 965 residues: Phosphoenolpyruvate carboxylase (965 aa).

Phosphoserine is present on Ser-11. Active-site residues include His-173 and Lys-601.

It belongs to the PEPCase type 1 family. In terms of assembly, homotetramer. The cofactor is Mg(2+).

The protein localises to the cytoplasm. The catalysed reaction is oxaloacetate + phosphate = phosphoenolpyruvate + hydrogencarbonate. It functions in the pathway photosynthesis; C3 acid pathway. With respect to regulation, by light-reversible phosphorylation. Functionally, through the carboxylation of phosphoenolpyruvate (PEP) it forms oxaloacetate, a four-carbon dicarboxylic acid source for the tricarboxylic acid cycle. In Solanum tuberosum (Potato), this protein is Phosphoenolpyruvate carboxylase (PPC1).